The following is a 451-amino-acid chain: Tubulin gamma-1 chain (451 aa).

Position 131 is a phosphoserine; by BRSK1 (Ser131). 142–148 is a GTP binding site; that stretch reads AGGTGSG.

Belongs to the tubulin family. Component of the gamma-tubulin ring complex (gTuRC) consisting of TUBGCP2, TUBGCP3, TUBGCP4, TUBGCP5 and TUBGCP6 and gamma-tubulin TUBG1 or TUBG2. TUBGCP2, TUBGCP3, TUBGCP4, TUBGCP5 and TUBGCP6 assemble in a 5:5:2:1:1 stoichiometry; each is associated with a gamma-tubulin, thereby arranging 14 gamma-tubulins in a helical manner. Gamma-tubulin at the first position is blocked by TUBGCP3 at the last position, allowing 13 protafilaments to grow into a microtubule. The gTuRC (via TUBGCP3 and TUBGCP6) interacts with ACTB and MZT1; the interactions form a luminal bridge that stabilizes the initial structure during complex assembly. The gTuRC (via TUBGCP2) interacts with MZT2A/MZT2B and CDK5RAP2 (via CM1 motif); the interactions play a role in gTuRC activation. Interacts with alpha-beta tubulin heterodimers; the interaction allows microtubules to nucleate from the gTuRC. Interacts with B9D2. Interacts with CDK5RAP2; the interaction is leading to centrosomal localization of TUBG1 and CDK5RAP2. Interacts with CIMAP3. Interacts with SAS6 and NUP62 at the centrosome. Interacts with EML3 (phosphorylated at 'Thr-881') and HAUS8. Interacts with DNM2; this interaction may participate in centrosome cohesion. Interacts with CCDC66. In terms of processing, phosphorylation at Ser-131 by BRSK1 regulates centrosome duplication, possibly by mediating relocation of gamma-tubulin and its associated proteins from the cytoplasm to the centrosome.

The protein localises to the cytoplasm. Its subcellular location is the cytoskeleton. It is found in the microtubule organizing center. The protein resides in the centrosome. It localises to the spindle. Functionally, tubulin is the major constituent of microtubules, protein filaments consisting of alpha- and beta-tubulin heterodimers. Gamma-tubulin is a key component of the gamma-tubulin ring complex (gTuRC) which mediates microtubule nucleation. The gTuRC regulates the minus-end nucleation of alpha-beta tubulin heterodimers that grow into microtubule protafilaments, a critical step in centrosome duplication and spindle formation. The polypeptide is Tubulin gamma-1 chain (Homo sapiens (Human)).